Here is a 224-residue protein sequence, read N- to C-terminus: DNA mismatch repair protein MutH (224 aa).

The protein belongs to the MutH family.

Its subcellular location is the cytoplasm. In terms of biological role, sequence-specific endonuclease that cleaves unmethylated GATC sequences. It is involved in DNA mismatch repair. The sequence is that of DNA mismatch repair protein MutH from Histophilus somni (strain 2336) (Haemophilus somnus).